Reading from the N-terminus, the 152-residue chain is Transcriptional regulator MraZ (152 aa).

SpoVT-AbrB domains are found at residues 5 to 52 and 81 to 124; these read ASAV…PLNQ and ATEC…SESE.

Belongs to the MraZ family. As to quaternary structure, forms oligomers.

It localises to the cytoplasm. The protein localises to the nucleoid. This Histophilus somni (strain 2336) (Haemophilus somnus) protein is Transcriptional regulator MraZ.